The sequence spans 678 residues: MSFSNGNMASYMTSSNGEEQSINNKNDIDDNSAYRRNNFRNSSNSGSHTFQLSDLDLDVDMRMDSANSSEKISKNLSSGIPDSFDSNVNSLLSPSSGSYSADLNYQSLYKPDLPQQQLQQQQLQQQQQQQQQQQQQQQKQTPTLKVEQSDTFQWDDILTPADNQHRPSLTNQFLSPRSNYDGTTRSSGIDSNYSDTESNYHTPYLYPQDLVSSPAMSHLTANNDDFDDLLSVASMNSNYLLPVNSHGYKHISNLDELDDLLSLTYSDNNLLSASNNSDFNNSNNGIINTADTQNSTIAINKSKVGTNQKMLLTIPTSSTPSPSTHAAPVTPIISIQEFNEGHFPVKNEDDGTLQLKVRDNESYSATNNNNLLRPDDNDYNNEALSDIDRSFEDIINGRKLKLKKSRRRSSQTSNNSFTSRRSSRSRSISPDEKAKSISANREKLLEMADLLPSSENDNNRERYDNDSKTSYNTINSSNFNEDNNNNNLLTSKPKIESGIVNIKNELDDTSKDLGILLDIDSLGQFEQKVGFKNDDNHENNDNGTFSVKKNDNLEKLDSVTNNRKNPANFACDVCGKKFTRPYNLKSHLRTHTNERPFICSICGKAFARQHDRKRHEDLHTGKKRYVCGGKLKDGKPWGCGKKFARSDALGRHFKTESGRRCITPLYEEARQEKSGQES.

A compositionally biased stretch (polar residues) spans 1–21; it reads MSFSNGNMASYMTSSNGEEQS. 2 disordered regions span residues 1 to 50 and 159 to 195; these read MSFS…SHTF and TPAD…NYSD. Low complexity predominate over residues 34-47; sequence YRRNNFRNSSNSGS. Residues 166–195 show a composition bias toward polar residues; that stretch reads RPSLTNQFLSPRSNYDGTTRSSGIDSNYSD. Thr-170 is modified (phosphothreonine). Ser-175, Ser-245, and Ser-385 each carry phosphoserine. Residues 401-486 form a disordered region; sequence KLKKSRRRSS…SNFNEDNNNN (86 aa). Over residues 410–428 the composition is skewed to low complexity; sequence SQTSNNSFTSRRSSRSRSI. Basic and acidic residues-rich tracts occupy residues 429-446 and 457-467; these read SPDE…KLLE and DNNRERYDNDS. Residues 472-486 show a composition bias toward low complexity; it reads NTINSSNFNEDNNNN. 2 consecutive C2H2-type zinc fingers follow at residues 569–591 and 597–619; these read FACD…LRTH and FICS…EDLH.

Phosphorylated. Dephosphorylated by calcineurin which leads to rapid translocation from the cytoplasm to the nucleus. Phosphorylated by the cyclin-CDK PHO80-PHO85.

The protein resides in the nucleus. It is found in the cytoplasm. Its function is as follows. Involved in the regulation of calcium ion homeostasis. Binds to the calcineurin-dependent response element. Transcriptionally regulates PMC1, PMR1, PMR2A and FKS2. The protein is Transcriptional regulator CRZ1 (CRZ1) of Saccharomyces cerevisiae (strain ATCC 204508 / S288c) (Baker's yeast).